Consider the following 363-residue polypeptide: tRNA dimethylallyltransferase (363 aa).

Position 65–72 (65–72) interacts with ATP; the sequence is GPTASGKS. 67–72 is a substrate binding site; sequence TASGKS. 2 interaction with substrate tRNA regions span residues 90 to 93 and 214 to 218; these read DSMQ and QRLIR.

It belongs to the IPP transferase family. Monomer. Mg(2+) is required as a cofactor.

It catalyses the reaction adenosine(37) in tRNA + dimethylallyl diphosphate = N(6)-dimethylallyladenosine(37) in tRNA + diphosphate. Functionally, catalyzes the transfer of a dimethylallyl group onto the adenine at position 37 in tRNAs that read codons beginning with uridine, leading to the formation of N6-(dimethylallyl)adenosine (i(6)A). The protein is tRNA dimethylallyltransferase of Rickettsia massiliae (strain Mtu5).